A 373-amino-acid polypeptide reads, in one-letter code: MTEPSRIQVRTADPYPVIIGRGLLGELVESVTGATSGVRTVAIFYQPPLAETAEVVRKALADTGIDAHRVEIPDAEAGKDLAVAGFCWEVLGRIGLTRNDVVVSLGGGAATDLAGFVAATWMRGVRIVHVPTTLLAMVDAAVGGKTGINTEAGKNLVGCFHEPTAVLVDLATLETVPRNEIVAGMAEIIKAGFIADPVILELVERDPQAALDPAGPVLPELIRRAIQVKADVVAADLKESSLREILNYGHTLGHAIERRERYRWRHGAAVAVGLVFAAELGRLAGRLDDATADRHRTILEAVGLPTTYDADALPQLLDAMQTDKKTRSGVLRFVVLDGLAKPGRLEGPDPSLLAAAYSAIAREESPSGGAILL.

NAD(+) contacts are provided by residues 74 to 79 (DAEAGK), 108 to 112 (GAATD), 132 to 133 (TT), Lys145, Lys154, and 172 to 175 (TLET). The Zn(2+) site is built by Glu187, His250, and His266.

The protein belongs to the sugar phosphate cyclases superfamily. Dehydroquinate synthase family. Co(2+) is required as a cofactor. The cofactor is Zn(2+). Requires NAD(+) as cofactor.

It is found in the cytoplasm. It carries out the reaction 7-phospho-2-dehydro-3-deoxy-D-arabino-heptonate = 3-dehydroquinate + phosphate. Its pathway is metabolic intermediate biosynthesis; chorismate biosynthesis; chorismate from D-erythrose 4-phosphate and phosphoenolpyruvate: step 2/7. Functionally, catalyzes the conversion of 3-deoxy-D-arabino-heptulosonate 7-phosphate (DAHP) to dehydroquinate (DHQ). The sequence is that of 3-dehydroquinate synthase from Nocardia farcinica (strain IFM 10152).